Here is a 531-residue protein sequence, read N- to C-terminus: CTP synthase (531 aa).

The interval 1-264 (MPKFVVVTGG…GDFLVERLRL (264 aa)) is amidoligase domain. Ser-13 is a CTP binding site. Ser-13 serves as a coordination point for UTP. 14-19 (GLGKGV) contributes to the ATP binding site. An L-glutamine-binding site is contributed by Tyr-54. Asp-71 is a binding site for ATP. Mg(2+)-binding residues include Asp-71 and Glu-139. Residues 146–148 (DYE), 185–190 (KTKPLQ), and Lys-221 contribute to the CTP site. UTP-binding positions include 185–190 (KTKPLQ) and Lys-221. Residues 293–531 (CGKYVELPDA…LSAAVEQSRR (239 aa)) enclose the Glutamine amidotransferase type-1 domain. Gly-351 is a binding site for L-glutamine. Residue Cys-378 is the Nucleophile; for glutamine hydrolysis of the active site. L-glutamine contacts are provided by residues 379 to 382 (FGMQ), Glu-402, and Arg-459. Residues His-504 and Glu-506 contribute to the active site.

This sequence belongs to the CTP synthase family. Homotetramer.

It carries out the reaction UTP + L-glutamine + ATP + H2O = CTP + L-glutamate + ADP + phosphate + 2 H(+). The enzyme catalyses L-glutamine + H2O = L-glutamate + NH4(+). It catalyses the reaction UTP + NH4(+) + ATP = CTP + ADP + phosphate + 2 H(+). Its pathway is pyrimidine metabolism; CTP biosynthesis via de novo pathway; CTP from UDP: step 2/2. Its activity is regulated as follows. Allosterically activated by GTP, when glutamine is the substrate; GTP has no effect on the reaction when ammonia is the substrate. The allosteric effector GTP functions by stabilizing the protein conformation that binds the tetrahedral intermediate(s) formed during glutamine hydrolysis. Inhibited by the product CTP, via allosteric rather than competitive inhibition. In terms of biological role, catalyzes the ATP-dependent amination of UTP to CTP with either L-glutamine or ammonia as the source of nitrogen. Regulates intracellular CTP levels through interactions with the four ribonucleotide triphosphates. This is CTP synthase from Pyrobaculum calidifontis (strain DSM 21063 / JCM 11548 / VA1).